We begin with the raw amino-acid sequence, 160 residues long: SsrA-binding protein (160 aa).

It belongs to the SmpB family.

It is found in the cytoplasm. Functionally, required for rescue of stalled ribosomes mediated by trans-translation. Binds to transfer-messenger RNA (tmRNA), required for stable association of tmRNA with ribosomes. tmRNA and SmpB together mimic tRNA shape, replacing the anticodon stem-loop with SmpB. tmRNA is encoded by the ssrA gene; the 2 termini fold to resemble tRNA(Ala) and it encodes a 'tag peptide', a short internal open reading frame. During trans-translation Ala-aminoacylated tmRNA acts like a tRNA, entering the A-site of stalled ribosomes, displacing the stalled mRNA. The ribosome then switches to translate the ORF on the tmRNA; the nascent peptide is terminated with the 'tag peptide' encoded by the tmRNA and targeted for degradation. The ribosome is freed to recommence translation, which seems to be the essential function of trans-translation. This chain is SsrA-binding protein, found in Klebsiella pneumoniae (strain 342).